Reading from the N-terminus, the 170-residue chain is Crossover junction endodeoxyribonuclease RuvC (170 aa).

Active-site residues include Asp-8, Glu-67, and Asp-139. Asp-8, Glu-67, and Asp-139 together coordinate Mg(2+).

Belongs to the RuvC family. Homodimer which binds Holliday junction (HJ) DNA. The HJ becomes 2-fold symmetrical on binding to RuvC with unstacked arms; it has a different conformation from HJ DNA in complex with RuvA. In the full resolvosome a probable DNA-RuvA(4)-RuvB(12)-RuvC(2) complex forms which resolves the HJ. It depends on Mg(2+) as a cofactor.

Its subcellular location is the cytoplasm. The catalysed reaction is Endonucleolytic cleavage at a junction such as a reciprocal single-stranded crossover between two homologous DNA duplexes (Holliday junction).. Its function is as follows. The RuvA-RuvB-RuvC complex processes Holliday junction (HJ) DNA during genetic recombination and DNA repair. Endonuclease that resolves HJ intermediates. Cleaves cruciform DNA by making single-stranded nicks across the HJ at symmetrical positions within the homologous arms, yielding a 5'-phosphate and a 3'-hydroxyl group; requires a central core of homology in the junction. The consensus cleavage sequence is 5'-(A/T)TT(C/G)-3'. Cleavage occurs on the 3'-side of the TT dinucleotide at the point of strand exchange. HJ branch migration catalyzed by RuvA-RuvB allows RuvC to scan DNA until it finds its consensus sequence, where it cleaves and resolves the cruciform DNA. This chain is Crossover junction endodeoxyribonuclease RuvC, found in Pectobacterium atrosepticum (strain SCRI 1043 / ATCC BAA-672) (Erwinia carotovora subsp. atroseptica).